Here is a 178-residue protein sequence, read N- to C-terminus: Inorganic pyrophosphatase (178 aa).

3 residues coordinate substrate: Lys30, Arg44, and Tyr56. Asp66, Asp71, and Asp103 together coordinate Mg(2+). Tyr140 provides a ligand contact to substrate.

It belongs to the PPase family. In terms of assembly, homohexamer. It depends on Mg(2+) as a cofactor.

It localises to the cytoplasm. It carries out the reaction diphosphate + H2O = 2 phosphate + H(+). Catalyzes the hydrolysis of inorganic pyrophosphate (PPi) forming two phosphate ions. The protein is Inorganic pyrophosphatase of Thermococcus kodakarensis (strain ATCC BAA-918 / JCM 12380 / KOD1) (Pyrococcus kodakaraensis (strain KOD1)).